Here is a 286-residue protein sequence, read N- to C-terminus: Phospholipase A1 (286 aa).

The signal sequence occupies residues 1-20 (MRISLACLAALCALPAGVMA). The Periplasmic portion of the chain corresponds to 21-49 (QDASVHDKPAVRGSIIANLLQDHDNPFLL). The chain crosses the membrane as a beta stranded span at residues 50-62 (YPYESNYLLYTWT). Over 63-81 (SDLNKEAIRSYDWAENARK) the chain is Extracellular. Residues 82-96 (DEVKFQLSLAFPLWR) traverse the membrane as a beta stranded segment. Residues 97-102 (GILGDN) lie on the Periplasmic side of the membrane. The chain crosses the membrane as a beta stranded span at residues 103–115 (SLLGASYTQKSWW). The Extracellular segment spans residues 116-125 (QLSNSKESAP). Position 123 (Ser123) interacts with Ca(2+). The chain crosses the membrane as a beta stranded span at residues 126–145 (FRETNYEPQLFLGFATDYQF). At 146 to 147 (AG) the chain is on the periplasmic side. A beta stranded transmembrane segment spans residues 148–161 (WTLRDIEMGYNHDS). Residue His159 is the Proton acceptor of the active site. Catalysis depends on Ser161, which acts as the Nucleophile. Residues 162–170 (NGRSDPTSR) lie on the Extracellular side of the membrane. Ca(2+) contacts are provided by Arg164 and Ser169. A beta stranded membrane pass occupies residues 171–183 (SWNRLYARLMAQN). Residues 184–185 (GN) are Periplasmic-facing. Residues 186 to 195 (WLVEVKPWYV) traverse the membrane as a beta stranded segment. Topologically, residues 196–213 (VGSTDDNPDITKYMGYYR) are extracellular. Asp201 contacts Ca(2+). Residues 214 to 220 (LKVGYQL) form a beta stranded membrane-spanning segment. At 221-222 (GE) the chain is on the periplasmic side. The chain crosses the membrane as a beta stranded span at residues 223 to 231 (AILSAQGQY). The Extracellular portion of the chain corresponds to 232–238 (NWNTGYG). The chain crosses the membrane as a beta stranded span at residues 239-247 (GAELGVSYP). Residues 248–252 (ITKHV) are Periplasmic-facing. Residues 253–262 (RAYTQIYSGY) traverse the membrane as a beta stranded segment. The Extracellular segment spans residues 263–271 (GESLIDYNF). The beta stranded transmembrane segment at 272–283 (NQTRVGVGLMLN) threads the bilayer. Topologically, residues 284–286 (DLF) are periplasmic.

The protein belongs to the phospholipase A1 family. As to quaternary structure, homodimer; dimerization is reversible, and the dimeric form is the active one. It depends on Ca(2+) as a cofactor.

The protein resides in the cell outer membrane. It catalyses the reaction a 1,2-diacyl-sn-glycero-3-phosphocholine + H2O = a 2-acyl-sn-glycero-3-phosphocholine + a fatty acid + H(+). It carries out the reaction a 1,2-diacyl-sn-glycero-3-phosphocholine + H2O = a 1-acyl-sn-glycero-3-phosphocholine + a fatty acid + H(+). Hydrolysis of phosphatidylcholine with phospholipase A2 (EC 3.1.1.4) and phospholipase A1 (EC 3.1.1.32) activities. In Klebsiella pneumoniae, this protein is Phospholipase A1 (pldA).